Here is a 76-residue protein sequence, read N- to C-terminus: Spore germination protein-like protein YdzR (76 aa).

The protein belongs to the GerPA/GerPF family.

This is Spore germination protein-like protein YdzR (ydzR) from Bacillus subtilis (strain 168).